A 347-amino-acid polypeptide reads, in one-letter code: Transcription factor EC (347 aa).

Residues 1–119 (MTLDHQIINP…GLTSASCPSS (119 aa)) are necessary for transcriptional transactivation. The 54-residue stretch at 139–192 (QKKDNHNLIERRRRYNINYRIKELGTLIPKSNDPDMRWNKGTILKASVEYIKWL) folds into the bHLH domain. Positions 271–347 (PSPELCDQAI…SFSSDDGDEL (77 aa)) are necessary for transcriptional transactivation. Positions 319–347 (DPLLSATSPAVSKESSRRSSFSSDDGDEL) are disordered. Low complexity predominate over residues 326-341 (SPAVSKESSRRSSFSS).

It belongs to the MiT/TFE family. As to quaternary structure, homodimer. Forms heterodimers with TFE3. Forms heterodimers with MITF. Interacts with MITF. Expressed moderately in spleen, kidney, bone marrow, small intestine and leukocytes. Expressed weakly in testis, trachea and colon.

The protein localises to the nucleus. In terms of biological role, transcriptional regulator that acts as a repressor or an activator. Acts as a transcriptional repressor on minimal promoter containing element F (that includes an E-box sequence). Binds to element F in an E-box sequence-specific manner. Acts as a transcriptional transactivator on the proximal promoter region of the tartrate-resistant acid phosphatase (TRAP) E-box containing promoter. Collaborates with MITF in target gene activation. Acts as a transcriptional repressor on minimal promoter containing mu E3 enhancer sequence. Binds to mu E3 DNA sequence of the immunoglobulin heavy-chain gene enhancer. Binds DNA in a homo- or heterodimeric form. This Homo sapiens (Human) protein is Transcription factor EC (TFEC).